The chain runs to 440 residues: Transposon Ty1-OL Gag polyprotein (440 aa).

Polar residues-rich tracts occupy residues Met1 to Ser23, Thr48 to Ser60, and Gln127 to Phe152. Disordered stretches follow at residues Met1–Gln93, Pro126–Pro173, and Gly352–Tyr440. Residues Thr153–Thr165 show a composition bias toward low complexity. Residues Asn299–His401 form an RNA-binding region. Residues Asn402–Ser418 show a composition bias toward low complexity. At Ser416 the chain carries Phosphoserine. Polar residues predominate over residues Lys419–Asn428. Basic and acidic residues predominate over residues Asn429 to Tyr440.

As to quaternary structure, homotrimer.

It is found in the cytoplasm. Its function is as follows. Capsid protein (CA) is the structural component of the virus-like particle (VLP), forming the shell that encapsulates the retrotransposons dimeric RNA genome. The particles are assembled from trimer-clustered units and there are holes in the capsid shells that allow for the diffusion of macromolecules. CA also has nucleocapsid-like chaperone activity, promoting primer tRNA(i)-Met annealing to the multipartite primer-binding site (PBS), dimerization of Ty1 RNA and initiation of reverse transcription. This is Transposon Ty1-OL Gag polyprotein (TY1A-OL) from Saccharomyces cerevisiae (strain ATCC 204508 / S288c) (Baker's yeast).